The primary structure comprises 146 residues: Hemoglobin subunit beta (146 aa).

Val-1 carries the N-acetylvaline modification. One can recognise a Globin domain in the interval 2 to 146 (HLTGEEKAAV…VANALAHKYH (145 aa)). Position 12 is a phosphothreonine (Thr-12). Position 44 is a phosphoserine (Ser-44). The residue at position 59 (Lys-59) is an N6-acetyllysine. His-63 is a binding site for heme b. The residue at position 82 (Lys-82) is an N6-acetyllysine. His-92 is a binding site for heme b. Position 93 is an S-nitrosocysteine (Cys-93). Lys-144 bears the N6-acetyllysine mark.

Belongs to the globin family. As to quaternary structure, heterotetramer of two alpha chains and two beta chains. In terms of tissue distribution, red blood cells.

Involved in oxygen transport from the lung to the various peripheral tissues. The chain is Hemoglobin subunit beta (HBB) from Lutra lutra (European river otter).